Here is a 213-residue protein sequence, read N- to C-terminus: Small ribosomal subunit protein uS4 (213 aa).

An S4 RNA-binding domain is found at R97–A165.

It belongs to the universal ribosomal protein uS4 family. Part of the 30S ribosomal subunit. Contacts protein S5. The interaction surface between S4 and S5 is involved in control of translational fidelity.

Its function is as follows. One of the primary rRNA binding proteins, it binds directly to 16S rRNA where it nucleates assembly of the body of the 30S subunit. Functionally, with S5 and S12 plays an important role in translational accuracy. This is Small ribosomal subunit protein uS4 from Psychrobacter sp. (strain PRwf-1).